A 292-amino-acid chain; its full sequence is Small ribosomal subunit biogenesis GTPase RsgA (292 aa).

The CP-type G domain occupies 65-223 (KTELIRPTVA…VVDTPGFSSL (159 aa)). Residues 114–117 (NKLD) and 165–173 (GPSGVGKST) each bind GTP. Positions 247, 252, 254, and 260 each coordinate Zn(2+).

Belongs to the TRAFAC class YlqF/YawG GTPase family. RsgA subfamily. As to quaternary structure, monomer. Associates with 30S ribosomal subunit, binds 16S rRNA. The cofactor is Zn(2+).

It localises to the cytoplasm. Its function is as follows. One of several proteins that assist in the late maturation steps of the functional core of the 30S ribosomal subunit. Helps release RbfA from mature subunits. May play a role in the assembly of ribosomal proteins into the subunit. Circularly permuted GTPase that catalyzes slow GTP hydrolysis, GTPase activity is stimulated by the 30S ribosomal subunit. The sequence is that of Small ribosomal subunit biogenesis GTPase RsgA from Alkaliphilus metalliredigens (strain QYMF).